A 406-amino-acid polypeptide reads, in one-letter code: S-adenosylmethionine synthase (406 aa).

H5 contributes to the ATP binding site. D7 is a Mg(2+) binding site. Residue E33 participates in K(+) binding. Residues E46 and Q89 each coordinate L-methionine. The interval 89-99 (QSPDIAQGVDT) is flexible loop. ATP contacts are provided by residues 164–166 (DGK), 240–241 (KF), D249, 255–256 (RK), A272, and K276. Position 249 (D249) interacts with L-methionine. K280 is an L-methionine binding site.

The protein belongs to the AdoMet synthase family. As to quaternary structure, homotetramer; dimer of dimers. Mg(2+) serves as cofactor. Requires K(+) as cofactor.

The protein resides in the cytoplasm. The catalysed reaction is L-methionine + ATP + H2O = S-adenosyl-L-methionine + phosphate + diphosphate. It participates in amino-acid biosynthesis; S-adenosyl-L-methionine biosynthesis; S-adenosyl-L-methionine from L-methionine: step 1/1. In terms of biological role, catalyzes the formation of S-adenosylmethionine (AdoMet) from methionine and ATP. The overall synthetic reaction is composed of two sequential steps, AdoMet formation and the subsequent tripolyphosphate hydrolysis which occurs prior to release of AdoMet from the enzyme. This is S-adenosylmethionine synthase from Synechococcus sp. (strain ATCC 27144 / PCC 6301 / SAUG 1402/1) (Anacystis nidulans).